Reading from the N-terminus, the 154-residue chain is Myoglobin (154 aa).

The 147-residue stretch at 2-148 folds into the Globin domain; it reads VLSEGEWQLV…FRKDIAAKYK (147 aa). Ser-4 bears the Phosphoserine mark. His-65 is a nitrite binding site. Residue His-65 participates in O2 binding. Phosphothreonine is present on Thr-68. Position 94 (His-94) interacts with heme b.

Belongs to the globin family. As to quaternary structure, monomeric.

It localises to the cytoplasm. The protein resides in the sarcoplasm. It catalyses the reaction Fe(III)-heme b-[protein] + nitric oxide + H2O = Fe(II)-heme b-[protein] + nitrite + 2 H(+). The enzyme catalyses H2O2 + AH2 = A + 2 H2O. Functionally, monomeric heme protein which primary function is to store oxygen and facilitate its diffusion within muscle tissues. Reversibly binds oxygen through a pentacoordinated heme iron and enables its timely and efficient release as needed during periods of heightened demand. Depending on the oxidative conditions of tissues and cells, and in addition to its ability to bind oxygen, it also has a nitrite reductase activity whereby it regulates the production of bioactive nitric oxide. Under stress conditions, like hypoxia and anoxia, it also protects cells against reactive oxygen species thanks to its pseudoperoxidase activity. This chain is Myoglobin (MB), found in Physeter macrocephalus (Sperm whale).